We begin with the raw amino-acid sequence, 232 residues long: Aquaporin Z 2 (232 aa).

The next 2 helical transmembrane spans lie at 9–29 (FLGT…ASAF) and 32–52 (VGIG…TMAY). The NPA 1 signature appears at 63-65 (NPA). 3 helical membrane-spanning segments follow: residues 82–102 (VSYV…LYVI), 129–149 (LTAA…IILG), and 158–178 (GFAP…SIPV). Residues 184–186 (NPA) carry the NPA 2 motif. A helical transmembrane segment spans residues 200 to 220 (LSQLWLFWIAPLFGAAIAGIV).

The protein belongs to the MIP/aquaporin (TC 1.A.8) family. In terms of assembly, homotetramer.

It localises to the cell inner membrane. The enzyme catalyses H2O(in) = H2O(out). Functionally, channel that permits osmotically driven movement of water in both directions. It is involved in the osmoregulation and in the maintenance of cell turgor during volume expansion in rapidly growing cells. It mediates rapid entry or exit of water in response to abrupt changes in osmolarity. The chain is Aquaporin Z 2 from Rhizobium meliloti (strain 1021) (Ensifer meliloti).